Reading from the N-terminus, the 339-residue chain is NADH-quinone oxidoreductase subunit H (339 aa).

Helical transmembrane passes span 9–29 (IFPL…LILC), 50–70 (PNVV…KLLF), 82–102 (ILFI…WAVI), 115–135 (VGVL…IIAG), 161–181 (MGLV…SGII), 187–207 (MPWW…ISVL), 235–255 (MGFA…SAMT), 275–295 (IPGF…FLWI), and 311–331 (GWKV…SVLV).

Belongs to the complex I subunit 1 family. NDH-1 is composed of 14 different subunits. Subunits NuoA, H, J, K, L, M, N constitute the membrane sector of the complex.

It is found in the cell inner membrane. It catalyses the reaction a quinone + NADH + 5 H(+)(in) = a quinol + NAD(+) + 4 H(+)(out). Its function is as follows. NDH-1 shuttles electrons from NADH, via FMN and iron-sulfur (Fe-S) centers, to quinones in the respiratory chain. The immediate electron acceptor for the enzyme in this species is believed to be ubiquinone. Couples the redox reaction to proton translocation (for every two electrons transferred, four hydrogen ions are translocated across the cytoplasmic membrane), and thus conserves the redox energy in a proton gradient. This subunit may bind ubiquinone. The chain is NADH-quinone oxidoreductase subunit H from Rickettsia felis (strain ATCC VR-1525 / URRWXCal2) (Rickettsia azadi).